The primary structure comprises 86 residues: Small ribosomal subunit protein bS20 (86 aa).

Belongs to the bacterial ribosomal protein bS20 family.

In terms of biological role, binds directly to 16S ribosomal RNA. The polypeptide is Small ribosomal subunit protein bS20 (Arthrobacter sp. (strain FB24)).